The sequence spans 327 residues: Zinc transport protein ZntB (327 aa).

Residues Met-1–Ser-271 are Cytoplasmic-facing. Residues Leu-272–Gly-292 form a helical membrane-spanning segment. Residues Gly-293–Pro-300 are Periplasmic-facing. A helical transmembrane segment spans residues Phe-301 to Leu-321. At Lys-322–Leu-327 the chain is on the cytoplasmic side.

Belongs to the CorA metal ion transporter (MIT) (TC 1.A.35) family.

The protein localises to the cell inner membrane. The catalysed reaction is Zn(2+)(out) + H(+)(out) = Zn(2+)(in) + H(+)(in). Functionally, zinc transporter. Acts as a Zn(2+):proton symporter, which likely mediates zinc ion uptake. This is Zinc transport protein ZntB from Pectobacterium carotovorum subsp. carotovorum (strain PC1).